A 224-amino-acid chain; its full sequence is 25 kDa integral membrane protein (224 aa).

The Cytoplasmic segment spans residues 1–12 (MKLSFTKVSLTN). The chain crosses the membrane as a helical span at residues 13–33 (ILILFNCLFIIFSMIVLTFGV). At 34–52 (IPQIYLLKFANILHGVRPS) the chain is on the extracellular side. Residues 53 to 73 (IFPIVCFTGSFVIIVACVGII) traverse the membrane as a helical segment. Residues 74–80 (GLMKGGK) lie on the Cytoplasmic side of the membrane. The chain crosses the membrane as a helical span at residues 81-101 (CLLTMHIIALIIATIIDISTA). Topologically, residues 102-189 (TLSAIKQNEF…LNKYVRYYID (88 aa)) are extracellular. An N-linked (GlcNAc...) asparagine glycan is attached at asparagine 120. The chain crosses the membrane as a helical span at residues 190–210 (ILIYLCFIFGFIKLIYSLFTF). Residues 211-224 (TQRQRIFSEKTPVA) are Cytoplasmic-facing.

This sequence belongs to the tetraspanin (TM4SF) family.

It localises to the membrane. In Schistosoma japonicum (Blood fluke), this protein is 25 kDa integral membrane protein.